Reading from the N-terminus, the 120-residue chain is Large ribosomal subunit protein uL18 (120 aa).

The protein belongs to the universal ribosomal protein uL18 family. Part of the 50S ribosomal subunit; part of the 5S rRNA/L5/L18/L25 subcomplex. Contacts the 5S and 23S rRNAs.

This is one of the proteins that bind and probably mediate the attachment of the 5S RNA into the large ribosomal subunit, where it forms part of the central protuberance. This Clostridium novyi (strain NT) protein is Large ribosomal subunit protein uL18.